A 283-amino-acid chain; its full sequence is Pyridoxal kinase PdxY (283 aa).

Ser-8 provides a ligand contact to substrate. ATP-binding residues include Asp-110 and Glu-147. Residue Asp-219 coordinates substrate.

Belongs to the pyridoxine kinase family. PdxY subfamily. Homodimer. Requires Mg(2+) as cofactor.

It catalyses the reaction pyridoxal + ATP = pyridoxal 5'-phosphate + ADP + H(+). It functions in the pathway cofactor metabolism; pyridoxal 5'-phosphate salvage; pyridoxal 5'-phosphate from pyridoxal: step 1/1. Its function is as follows. Pyridoxal kinase involved in the salvage pathway of pyridoxal 5'-phosphate (PLP). Catalyzes the phosphorylation of pyridoxal to PLP. This Corynebacterium diphtheriae (strain ATCC 700971 / NCTC 13129 / Biotype gravis) protein is Pyridoxal kinase PdxY.